The chain runs to 93 residues: Small ribosomal subunit protein bS6 (93 aa).

Belongs to the bacterial ribosomal protein bS6 family.

Its function is as follows. Binds together with bS18 to 16S ribosomal RNA. The sequence is that of Small ribosomal subunit protein bS6 from Treponema denticola (strain ATCC 35405 / DSM 14222 / CIP 103919 / JCM 8153 / KCTC 15104).